The following is a 359-amino-acid chain: 3-dehydroquinate synthase (359 aa).

NAD(+) contacts are provided by residues D70–K75, G105–D109, T129–T130, K142, K151, and F169–T172. The Zn(2+) site is built by E184, H247, and H264.

Belongs to the sugar phosphate cyclases superfamily. Dehydroquinate synthase family. The cofactor is Co(2+). It depends on Zn(2+) as a cofactor. NAD(+) is required as a cofactor.

It localises to the cytoplasm. The catalysed reaction is 7-phospho-2-dehydro-3-deoxy-D-arabino-heptonate = 3-dehydroquinate + phosphate. Its pathway is metabolic intermediate biosynthesis; chorismate biosynthesis; chorismate from D-erythrose 4-phosphate and phosphoenolpyruvate: step 2/7. In terms of biological role, catalyzes the conversion of 3-deoxy-D-arabino-heptulosonate 7-phosphate (DAHP) to dehydroquinate (DHQ). In Francisella tularensis subsp. mediasiatica (strain FSC147), this protein is 3-dehydroquinate synthase.